We begin with the raw amino-acid sequence, 251 residues long: Ditrans,polycis-undecaprenyl-diphosphate synthase ((2E,6E)-farnesyl-diphosphate specific) (251 aa).

Aspartate 20 is an active-site residue. Aspartate 20 lines the Mg(2+) pocket. Residues 21–24 (GNGR), tryptophan 25, arginine 33, histidine 37, and 65–67 (SSE) contribute to the substrate site. Asparagine 68 serves as the catalytic Proton acceptor. Substrate-binding positions include tryptophan 69, arginine 71, arginine 188, and 194-196 (RIS). Glutamate 207 provides a ligand contact to Mg(2+).

This sequence belongs to the UPP synthase family. As to quaternary structure, homodimer. Mg(2+) is required as a cofactor.

The catalysed reaction is 8 isopentenyl diphosphate + (2E,6E)-farnesyl diphosphate = di-trans,octa-cis-undecaprenyl diphosphate + 8 diphosphate. In terms of biological role, catalyzes the sequential condensation of isopentenyl diphosphate (IPP) with (2E,6E)-farnesyl diphosphate (E,E-FPP) to yield (2Z,6Z,10Z,14Z,18Z,22Z,26Z,30Z,34E,38E)-undecaprenyl diphosphate (di-trans,octa-cis-UPP). UPP is the precursor of glycosyl carrier lipid in the biosynthesis of bacterial cell wall polysaccharide components such as peptidoglycan and lipopolysaccharide. In Vibrio vulnificus (strain CMCP6), this protein is Ditrans,polycis-undecaprenyl-diphosphate synthase ((2E,6E)-farnesyl-diphosphate specific).